Consider the following 252-residue polypeptide: Adenosylcobinamide-GDP ribazoletransferase (252 aa).

The next 7 membrane-spanning stretches (helical) occupy residues 36 to 56, 59 to 79, 109 to 129, 133 to 153, 170 to 192, 199 to 218, and 228 to 248; these read LVPIVGLIIGGIMGVTYMLLV, FFYKISAVLVLIEYIFLTGGI, VGTNAVLAVISVIILNYVILT, PAYMVKVIILFPVAGRLGSIV, SFIDYCTLKELAIGIILYAVIFL, GYIIMIFPILTAVILIKYFT, and ILGAVCELNQTFYLMTVYAVL.

The protein belongs to the CobS family. Mg(2+) serves as cofactor.

It is found in the cell membrane. The enzyme catalyses alpha-ribazole + adenosylcob(III)inamide-GDP = adenosylcob(III)alamin + GMP + H(+). The catalysed reaction is alpha-ribazole 5'-phosphate + adenosylcob(III)inamide-GDP = adenosylcob(III)alamin 5'-phosphate + GMP + H(+). Its pathway is cofactor biosynthesis; adenosylcobalamin biosynthesis; adenosylcobalamin from cob(II)yrinate a,c-diamide: step 7/7. Its function is as follows. Joins adenosylcobinamide-GDP and alpha-ribazole to generate adenosylcobalamin (Ado-cobalamin). Also synthesizes adenosylcobalamin 5'-phosphate from adenosylcobinamide-GDP and alpha-ribazole 5'-phosphate. The protein is Adenosylcobinamide-GDP ribazoletransferase of Clostridium acetobutylicum (strain ATCC 824 / DSM 792 / JCM 1419 / IAM 19013 / LMG 5710 / NBRC 13948 / NRRL B-527 / VKM B-1787 / 2291 / W).